A 91-amino-acid polypeptide reads, in one-letter code: Putative membrane protein insertion efficiency factor (91 aa).

Positions 72-91 (SGGNDPVPEKLTHINHQHEK) are disordered. Over residues 78–91 (VPEKLTHINHQHEK) the composition is skewed to basic and acidic residues.

The protein belongs to the UPF0161 family.

It is found in the cell inner membrane. Its function is as follows. Could be involved in insertion of integral membrane proteins into the membrane. The chain is Putative membrane protein insertion efficiency factor from Pseudoalteromonas translucida (strain TAC 125).